A 419-amino-acid chain; its full sequence is Gamma-glutamyl phosphate reductase (419 aa).

This sequence belongs to the gamma-glutamyl phosphate reductase family.

The protein resides in the cytoplasm. It catalyses the reaction L-glutamate 5-semialdehyde + phosphate + NADP(+) = L-glutamyl 5-phosphate + NADPH + H(+). The protein operates within amino-acid biosynthesis; L-proline biosynthesis; L-glutamate 5-semialdehyde from L-glutamate: step 2/2. Functionally, catalyzes the NADPH-dependent reduction of L-glutamate 5-phosphate into L-glutamate 5-semialdehyde and phosphate. The product spontaneously undergoes cyclization to form 1-pyrroline-5-carboxylate. The sequence is that of Gamma-glutamyl phosphate reductase from Mannheimia succiniciproducens (strain KCTC 0769BP / MBEL55E).